The primary structure comprises 288 residues: ATP synthase subunit a (288 aa).

6 helical membrane passes run 47 to 67 (LDSMLWSIGLGIVFCAIFWMV), 104 to 124 (LIAPLALTIFVWIFLMNLMDL), 157 to 177 (DPNITLGMSFSVFILILFYSI), 199 to 219 (PIVQIILIPINFILEFVTLIA), 237 to 257 (LIFILIALMPFWIQWALSVPW), and 258 to 278 (AIFHILIITLQAFVFMMLTIV).

Belongs to the ATPase A chain family. F-type ATPases have 2 components, CF(1) - the catalytic core - and CF(0) - the membrane proton channel. CF(1) has five subunits: alpha(3), beta(3), gamma(1), delta(1), epsilon(1). CF(0) has three main subunits: a(1), b(2) and c(9-12). The alpha and beta chains form an alternating ring which encloses part of the gamma chain. CF(1) is attached to CF(0) by a central stalk formed by the gamma and epsilon chains, while a peripheral stalk is formed by the delta and b chains.

It is found in the cell inner membrane. Key component of the proton channel; it plays a direct role in the translocation of protons across the membrane. The polypeptide is ATP synthase subunit a (Psychrobacter cryohalolentis (strain ATCC BAA-1226 / DSM 17306 / VKM B-2378 / K5)).